Reading from the N-terminus, the 344-residue chain is Short chain dehydrogenase/reductase mfmJ (344 aa).

6 residues coordinate NADP(+): Leu51, Lys76, Asp99, Asn126, Tyr213, and Lys217. Residue Tyr213 is the Proton donor of the active site. Lys217 serves as the catalytic Lowers pKa of active site Tyr.

The protein belongs to the short-chain dehydrogenases/reductases (SDR) family.

In terms of biological role, short chain dehydrogenase/reductase; part of the gene cluster that mediates the biosynthesis of the phthalide-terpenoid hybrid 11'-O-desmethylfendlerol. MfmJ seems not to be involved directly in the biosynthesis of 11'-O-desmethylfendlerol and its role has still to be determined. The biosynthesis of 11'-O-desmethylfendlerol begins with the NR-PKS mfmB that forms 3,5-dimethylorsellinic acid (DMOA), which is then transformed into the phthalide 5,7-dihydroxy-4-(hydroxymethyl)-6-methylphthalide by the cytochrome P450 monooxygenase mfmA and the hydrolase mfmC. Subsequently, the methyltransferase mfmE catalyzes 7-O-methylation to yield 5-hydroxy-4-(hydroxymethyl)-7-methoxy-6-methylphthalide, which undergoes C-3 hydroxylation by the cytochrome P450 monooxygenase mfmF. The resultant cyclopolic acid (2,5-dihydroxy-4-(hydroxymethyl)-7-methoxy-6-methylphthalide) is then farnesylated by the DMATS-type prenyltransferase mfmD to afford 5-O-farnesylcyclopolic acid. Finally, the Pyr4-family terpene cyclase mfmH cyclizes the farnesyl moiety of 5-O-farnesylcyclopolic acid into a drimane-like structure, thus completing the biosynthesis of 11'-O-desmethylfendlerol. This chain is Short chain dehydrogenase/reductase mfmJ, found in Annulohypoxylon moriforme (Filamentous fungus).